A 689-amino-acid chain; its full sequence is Protein CFAP20DC (689 aa).

Disordered stretches follow at residues 241–263 (LKST…NRIE), 333–423 (SKES…GPSE), and 584–659 (ISTS…DLSV). Composition is skewed to polar residues over residues 251–260 (TPSGSSSGNN) and 343–359 (EESQ…SSRP). Residues 394-405 (SEDDFYGGDSSE) show a composition bias toward acidic residues. A compositionally biased stretch (polar residues) spans 409-421 (HSIQGSRGPTTGP). Over residues 584–593 (ISTSSDDTTT) the composition is skewed to low complexity.

In Homo sapiens (Human), this protein is Protein CFAP20DC.